The following is a 724-amino-acid chain: MSKDQIPVENLTELEASSELAFLAAELARHDALYHGKDAPEISDADYDALKRRNDAIEAAFPALVRADSPSKKVGFTPLPTFAPIVHARPMLSLDNTFSEEDLRDFVSSVYRFLGHLPDDSIAFTAEPKIDGLSMSIRYENRKLKTAATRGDGTTGENVTANIRTIKEIPNELPADAPDVVEVRGEVYMAKSDFLALNAQMEADGKQTYVNPRNTASGSLRQLDANVTAKRKLRFFAYALGEVSNGGQPARIADTQYGIVEKFREWGFPVNPLMKRFTSAQQLLEHYNEIGVARPDLDYDIDGVVYKVDRLDLQERLGFRSRSPRWATAHKFPAEQAFTTVENIEIQVGRTGALTPVARLTPITVGGVVVTNATLHNADYIEGIGNSGERIRPEDHDIRIGDTVIVQRAGDVIPQVLDVLLEKRAAGAAKYVFPEKCPVCGSHAVRERNEKTGKLDSVTRCTGGFVCRAQAVEHLKHFVSRNAFDIEGLGTKQIDFFFESDDPALSIKTAPDIFTLKARQEASHLTKLENIDGFGKVSVKKLFDAIDARRAIDLHRLIFALGIRHVGETTAKLLARSYGTYEHFEKAMKAAADPASDAWAELNSIDGIGEVVARAIIEFYKEPRNLDVIDRLIRELQPKEAEKPSTEGSPVAGKTVVFTGSLEKFTRDEAKARAESLGAKVAGSVSKKTDILVAGPGAGSKLAKATELGVQTMDEDEWLALIGG.

Residues D44–D48, S93–L94, and E127 each bind NAD(+). The N6-AMP-lysine intermediate role is filled by K129. 4 residues coordinate NAD(+): R150, E186, K307, and K331. C437, C440, C461, and C467 together coordinate Zn(2+). A BRCT domain is found at T646–G724.

The protein belongs to the NAD-dependent DNA ligase family. LigA subfamily. Requires Mg(2+) as cofactor. The cofactor is Mn(2+).

The catalysed reaction is NAD(+) + (deoxyribonucleotide)n-3'-hydroxyl + 5'-phospho-(deoxyribonucleotide)m = (deoxyribonucleotide)n+m + AMP + beta-nicotinamide D-nucleotide.. In terms of biological role, DNA ligase that catalyzes the formation of phosphodiester linkages between 5'-phosphoryl and 3'-hydroxyl groups in double-stranded DNA using NAD as a coenzyme and as the energy source for the reaction. It is essential for DNA replication and repair of damaged DNA. This is DNA ligase from Agrobacterium fabrum (strain C58 / ATCC 33970) (Agrobacterium tumefaciens (strain C58)).